The chain runs to 350 residues: Atypical chemokine receptor 4 (350 aa).

Residues 1–41 (MAVEYNQSTDYYYEENEMNDTHDYSQYEVICIKEEVRKFAK) lie on the Extracellular side of the membrane. 2 N-linked (GlcNAc...) asparagine glycosylation sites follow: asparagine 6 and asparagine 19. The helical transmembrane segment at 42 to 66 (VFLPAFFTIAFIIGLAGNSTVVAIY) threads the bilayer. Residues 67–79 (AYYKKRRTKTDVY) are Cytoplasmic-facing. Residues 80–99 (ILNLAVADLFLLFTLPFWAV) traverse the membrane as a helical segment. Topologically, residues 100 to 113 (NAVHGWVLGKIMCK) are extracellular. Cysteine 112 and cysteine 184 are oxidised to a cystine. Residues 114-135 (VTSALYTVNFVSGMQFLACIST) traverse the membrane as a helical segment. At 136–153 (DRYWAVTKAPSQSGVGKP) the chain is on the cytoplasmic side. Residues 154 to 175 (CWVICFCVWVAAILLSIPQLVF) form a helical membrane-spanning segment. Topologically, residues 176–199 (YTVNHKARCVPIFPYHLGTSMKAS) are extracellular. The helical transmembrane segment at 200–222 (IQILEICIGFIIPFLIMAVCYFI) threads the bilayer. Residues 223 to 241 (TAKTLIKMPNIKKSQPLKV) are Cytoplasmic-facing. A helical membrane pass occupies residues 242–265 (LFTVVIVFIVTQLPYNIVKFCQAI). The Extracellular segment spans residues 266 to 283 (DIIYSLITDCDMSKRMDV). Residues 284–306 (AIQITESIALFHSCLNPVLYVFM) traverse the membrane as a helical segment. At 307–350 (GTSFKNYIMKVAKKYGSWRRQRQNVEEIPFESEDATEPTSTFSI) the chain is on the cytoplasmic side.

This sequence belongs to the G-protein coupled receptor 1 family. Atypical chemokine receptor subfamily. Forms heteromers with CXCR3. Interacts with ARRB1 and ARRB2. The Ser/Thr residues in the C-terminal cytoplasmic tail may be phosphorylated. In terms of tissue distribution, expressed in circumvallate and fungiform papillae, olfactory epithelium and lung. Lower expression in liver, kidney and tongue epithelium bearing no taste papillae. Very low expression in the cerebral cortex of the brain.

The protein localises to the early endosome. The protein resides in the recycling endosome. It is found in the cell membrane. Functionally, atypical chemokine receptor that controls chemokine levels and localization via high-affinity chemokine binding that is uncoupled from classic ligand-driven signal transduction cascades, resulting instead in chemokine sequestration, degradation, or transcytosis. Also known as interceptor (internalizing receptor) or chemokine-scavenging receptor or chemokine decoy receptor. Acts as a receptor for chemokines CCL2, CCL8, CCL13, CCL19, CCL21 and CCL25. Chemokine-binding does not activate G-protein-mediated signal transduction but instead induces beta-arrestin recruitment, leading to ligand internalization. Plays an important role in controlling the migration of immune and cancer cells that express chemokine receptors CCR7 and CCR9, by reducing the availability of CCL19, CCL21, and CCL25 through internalization. Negatively regulates CXCR3-induced chemotaxis. Regulates T-cell development in the thymus. The polypeptide is Atypical chemokine receptor 4 (ACKR4) (Bos taurus (Bovine)).